The sequence spans 410 residues: Aspartate aminotransferase (410 aa).

Gly-47, Trp-135, and Asn-185 together coordinate L-aspartate. N6-(pyridoxal phosphate)lysine is present on Lys-249. L-aspartate is bound at residue Arg-385.

This sequence belongs to the class-I pyridoxal-phosphate-dependent aminotransferase family. Homodimer. It depends on pyridoxal 5'-phosphate as a cofactor.

It is found in the cytoplasm. It carries out the reaction L-aspartate + 2-oxoglutarate = oxaloacetate + L-glutamate. The enzyme catalyses L-2-aminoadipate + 2-oxoglutarate = 2-oxoadipate + L-glutamate. Catalyzes the reversible conversion of aspartate and 2-oxoglutarate to glutamate and oxaloacetate. Genetic evidence shows that this protein is involved in L-lysine catabolism. It may have 2-aminoadipate:2-oxoglutarate aminotransferase activity. The protein is Aspartate aminotransferase (aatB) of Rhizobium meliloti (strain 1021) (Ensifer meliloti).